The chain runs to 420 residues: MLISRPRGTSDLLPGDTARWQRVEAVIRDLCRVYGYGEIRTPLFEATELFQRGVGDITDIVEKEMYTFTDKGGRSLTLRPEGTAPVTRAYLENGLHAVPQPVKLFYVGPMFRYDRPQAGRYRQFHQFGVEIFGAADPAADAEVIALAMHFFDRLGLAGLELHLNSVGCPGCRAVLRRKLADYFEPRADELCANCRGRLRKNPLRLLDCKEERCREAGRGAPVPVDYLCPECGGHFGRVQRYLDLLGISFKLNPCLVRGLDYYTRTAFEILVPGGGAQDAVGGGGRYDGLVSAIGGPAVPGVGFALGLERTLLLWSRQAGEEVLPQGPVVFIATAGETEETATVLLSGLRAAGVPADREYTGRSLKAQMKFAAKLGARWVIIVGKDELEAGEVILRDMGAGLQTRVSLGEVVERLRRDARG.

It belongs to the class-II aminoacyl-tRNA synthetase family. As to quaternary structure, homodimer.

The protein resides in the cytoplasm. It catalyses the reaction tRNA(His) + L-histidine + ATP = L-histidyl-tRNA(His) + AMP + diphosphate + H(+). The polypeptide is Histidine--tRNA ligase (Desulforudis audaxviator (strain MP104C)).